Here is a 1607-residue protein sequence, read N- to C-terminus: Laminin subunit gamma-1 (1607 aa).

The first 33 residues, 1–33, serve as a signal peptide directing secretion; that stretch reads MTGGGRAALALQPRGRLWPLLAVLAAVAGCVRA. Positions 44-283 constitute a Laminin N-terminal domain; the sequence is RPQRCMPEFV…AISDFAVGGR (240 aa). N58 and N132 each carry an N-linked (GlcNAc...) asparagine glycan. Cystine bridges form between C284–C293, C286–C303, C305–C314, C340–C349, C342–C365, C368–C377, C380–C393, C396–C408, C398–C414, C416–C425, C428–C440, C443–C454, C445–C461, C463–C472, and C475–C490. Laminin EGF-like domains lie at 284–339, 340–395, 396–442, and 443–492; these read CKCN…ESLP, CDCN…ACSP, CHCS…GCRP, and CSCD…GCTP. In terms of domain architecture, Laminin EGF-like 5; first part spans 493–502; sequence CFCFGHSSVC. One can recognise a Laminin IV type A domain in the interval 512–687; it reads DISSTFQIDE…PGVPATWVES (176 aa). N574 and N648 each carry an N-linked (GlcNAc...) asparagine glycan. Residues 688–721 form the Laminin EGF-like 5; second part domain; it reads CTCPVGYGGQFCETCLPGYRRETPSLGPYSPCVL. Disulfide bonds link C722-C731, C724-C738, C740-C749, C752-C768, C771-C779, C773-C790, C793-C802, C805-C823, C826-C840, C828-C847, C850-C859, C862-C879, C882-C896, C884-C903, C905-C914, C917-C930, C933-C945, C935-C952, C954-C963, C966-C978, C981-C993, C983-C999, C1001-C1010, and C1013-C1026. 2 Laminin EGF-like domains span residues 722-770 and 771-825; these read CTCN…DCQP and CPCP…LCRP. The Laminin EGF-like 8; nidogen-binding domain occupies 826–881; that stretch reads CQCNDNIDPNAVGNCNRLTGECLKCIYNTAGFYCDRCKEGFFGNPLAPNPADKCKA. Laminin EGF-like domains are found at residues 882–932, 933–980, and 981–1028; these read CACN…GCER, CDCH…GCKP, and CDCH…GCQE. Residues N1020 and N1105 are each glycosylated (N-linked (GlcNAc...) asparagine). A domain II and I region spans residues 1029–1607; it reads CPACYRLVKD…CFNTPSIEKP (579 aa). A coiled-coil region spans residues 1034-1594; that stretch reads RLVKDKAAEH…HNLEDIKKTL (561 aa). S1147 is modified (phosphoserine). N-linked (GlcNAc...) asparagine glycosylation is found at N1159, N1173, N1203, N1221, N1239, N1378, N1393, and N1437. S1491 carries the phosphoserine modification.

Laminin is a complex glycoprotein, consisting of three different polypeptide chains (alpha, beta, gamma), which are bound to each other by disulfide bonds into a cross-shaped molecule comprising one long and three short arms with globules at each end. Gamma-1 is a subunit of laminin-1 (laminin-111 or EHS laminin), laminin-2 (laminin-211 or merosin), laminin-3 (laminin-121 or S-laminin), laminin-4 (laminin-221 or S-merosin), laminin-6 (laminin-311 or K-laminin), laminin-7 (laminin-321 or KS-laminin), laminin-8 (laminin-411), laminin-9 (laminin-421), laminin-10 (laminin-511) and laminin-11 (laminin-521). Interacts with SVEP1. Found in the basement membranes (major component).

The protein localises to the secreted. Its subcellular location is the extracellular space. The protein resides in the extracellular matrix. It is found in the basement membrane. Functionally, binding to cells via a high affinity receptor, laminin is thought to mediate the attachment, migration and organization of cells into tissues during embryonic development by interacting with other extracellular matrix components. The protein is Laminin subunit gamma-1 (Lamc1) of Mus musculus (Mouse).